The chain runs to 263 residues: 4-hydroxy-tetrahydrodipicolinate reductase (263 aa).

NAD(+) contacts are provided by residues 7–12, 96–98, and 122–125; these read GFKGRM, GTT, and APNF. His-152 functions as the Proton donor/acceptor in the catalytic mechanism. Residue His-153 participates in (S)-2,3,4,5-tetrahydrodipicolinate binding. The active-site Proton donor is the Lys-156. 162 to 163 contributes to the (S)-2,3,4,5-tetrahydrodipicolinate binding site; sequence GT.

The protein belongs to the DapB family.

It localises to the cytoplasm. It catalyses the reaction (S)-2,3,4,5-tetrahydrodipicolinate + NAD(+) + H2O = (2S,4S)-4-hydroxy-2,3,4,5-tetrahydrodipicolinate + NADH + H(+). The enzyme catalyses (S)-2,3,4,5-tetrahydrodipicolinate + NADP(+) + H2O = (2S,4S)-4-hydroxy-2,3,4,5-tetrahydrodipicolinate + NADPH + H(+). It participates in amino-acid biosynthesis; L-lysine biosynthesis via DAP pathway; (S)-tetrahydrodipicolinate from L-aspartate: step 4/4. In terms of biological role, catalyzes the conversion of 4-hydroxy-tetrahydrodipicolinate (HTPA) to tetrahydrodipicolinate. In Listeria innocua serovar 6a (strain ATCC BAA-680 / CLIP 11262), this protein is 4-hydroxy-tetrahydrodipicolinate reductase.